The chain runs to 183 residues: MNITQIIEKLKQNEVVAYPTEAVFGLGCNPFSQSAVEKLLILKQRPREKGLILVAPKLDYFFSFIDKEQINSQHWQKLQQTYPRPITWIVPAKKDIAKFLCGNFNSIAIRVSQHPAIKILCEQTGFALTSTSANLSGIAPCKTSDEVRLQFGADFPVLDMSVGSAAKPSEIRDLFTNQLVRQG.

The 183-residue stretch at 1 to 183 (MNITQIIEKL…LFTNQLVRQG (183 aa)) folds into the YrdC-like domain.

This sequence belongs to the SUA5 family. TsaC subfamily.

It localises to the cytoplasm. It catalyses the reaction L-threonine + hydrogencarbonate + ATP = L-threonylcarbamoyladenylate + diphosphate + H2O. In terms of biological role, required for the formation of a threonylcarbamoyl group on adenosine at position 37 (t(6)A37) in tRNAs that read codons beginning with adenine. Catalyzes the conversion of L-threonine, HCO(3)(-)/CO(2) and ATP to give threonylcarbamoyl-AMP (TC-AMP) as the acyladenylate intermediate, with the release of diphosphate. The protein is Threonylcarbamoyl-AMP synthase of Histophilus somni (strain 129Pt) (Haemophilus somnus).